Here is a 60-residue protein sequence, read N- to C-terminus: Large ribosomal subunit protein uL30 (60 aa).

This sequence belongs to the universal ribosomal protein uL30 family. Part of the 50S ribosomal subunit.

The polypeptide is Large ribosomal subunit protein uL30 (Streptococcus uberis (strain ATCC BAA-854 / 0140J)).